The chain runs to 324 residues: BURP domain-containing protein 5 (324 aa).

An N-terminal signal peptide occupies residues 1–30; sequence MCATLCTLLDEISILILMLLLIQLEIRVSA. In terms of domain architecture, BURP spans 109 to 323; the sequence is FFLETNLQSS…QPDVVVWTRR (215 aa).

In terms of tissue distribution, expressed in panicles.

In Oryza sativa subsp. japonica (Rice), this protein is BURP domain-containing protein 5 (BURP5).